A 247-amino-acid polypeptide reads, in one-letter code: tRNA (guanine-N(1)-)-methyltransferase (247 aa).

S-adenosyl-L-methionine-binding positions include G115 and 135-140 (IGDYVL).

This sequence belongs to the RNA methyltransferase TrmD family. In terms of assembly, homodimer.

Its subcellular location is the cytoplasm. The catalysed reaction is guanosine(37) in tRNA + S-adenosyl-L-methionine = N(1)-methylguanosine(37) in tRNA + S-adenosyl-L-homocysteine + H(+). Its function is as follows. Specifically methylates guanosine-37 in various tRNAs. This chain is tRNA (guanine-N(1)-)-methyltransferase, found in Alkaliphilus metalliredigens (strain QYMF).